A 441-amino-acid polypeptide reads, in one-letter code: Ribulose bisphosphate carboxylase large chain (441 aa).

2 residues coordinate substrate: Asn-89 and Thr-139. Residue Lys-141 is the Proton acceptor of the active site. Lys-143 provides a ligand contact to substrate. Positions 167, 169, and 170 each coordinate Mg(2+). N6-carboxylysine is present on Lys-167. His-260 acts as the Proton acceptor in catalysis. 2 residues coordinate substrate: Xaa-261 and Ser-345.

Belongs to the RuBisCO large chain family. Type I subfamily. As to quaternary structure, heterohexadecamer of 8 large chains and 8 small chains; disulfide-linked. The disulfide link is formed within the large subunit homodimers. Mg(2+) serves as cofactor. The disulfide bond which can form in the large chain dimeric partners within the hexadecamer appears to be associated with oxidative stress and protein turnover.

It is found in the plastid. It localises to the chloroplast. The enzyme catalyses 2 (2R)-3-phosphoglycerate + 2 H(+) = D-ribulose 1,5-bisphosphate + CO2 + H2O. It catalyses the reaction D-ribulose 1,5-bisphosphate + O2 = 2-phosphoglycolate + (2R)-3-phosphoglycerate + 2 H(+). RuBisCO catalyzes two reactions: the carboxylation of D-ribulose 1,5-bisphosphate, the primary event in carbon dioxide fixation, as well as the oxidative fragmentation of the pentose substrate in the photorespiration process. Both reactions occur simultaneously and in competition at the same active site. This chain is Ribulose bisphosphate carboxylase large chain, found in Asclepias exaltata (Poke milkweed).